The sequence spans 84 residues: ATP synthase subunit c (84 aa).

The next 2 membrane-spanning stretches (helical) occupy residues 9–29 and 54–74; these read IIGASILLAFAALGTAIGFAI and IVAGLLDAIAMIAVGISLLFI.

Belongs to the ATPase C chain family. F-type ATPases have 2 components, F(1) - the catalytic core - and F(0) - the membrane proton channel. F(1) has five subunits: alpha(3), beta(3), gamma(1), delta(1), epsilon(1). F(0) has three main subunits: a(1), b(2) and c(10-14). The alpha and beta chains form an alternating ring which encloses part of the gamma chain. F(1) is attached to F(0) by a central stalk formed by the gamma and epsilon chains, while a peripheral stalk is formed by the delta and b chains.

The protein localises to the cell inner membrane. In terms of biological role, f(1)F(0) ATP synthase produces ATP from ADP in the presence of a proton or sodium gradient. F-type ATPases consist of two structural domains, F(1) containing the extramembraneous catalytic core and F(0) containing the membrane proton channel, linked together by a central stalk and a peripheral stalk. During catalysis, ATP synthesis in the catalytic domain of F(1) is coupled via a rotary mechanism of the central stalk subunits to proton translocation. Its function is as follows. Key component of the F(0) channel; it plays a direct role in translocation across the membrane. A homomeric c-ring of between 10-14 subunits forms the central stalk rotor element with the F(1) delta and epsilon subunits. In Actinobacillus pleuropneumoniae serotype 7 (strain AP76), this protein is ATP synthase subunit c.